A 419-amino-acid chain; its full sequence is Interferon regulatory factor 3 (419 aa).

Thr3 is modified (phosphothreonine). A DNA-binding region (IRF tryptophan pentad repeat) is located at residues 5–111 (KPRILPWLVS…DPHKVYEFVT (107 aa)). Position 14 is a phosphoserine (Ser14). Thr75 carries the phosphothreonine modification. Phosphoserine is present on residues Ser97, Ser123, and Ser135. The interval 140-419 (PKLFDGLILG…DMDFQATGNI (280 aa)) is mediates interaction with ZDHHC11. Lys188 is covalently cross-linked (Glycyl lysine isopeptide (Lys-Gly) (interchain with G-Cter in ISG15)). Residues 194-353 (EQWEFEVTAF…MWPQDQPWVK (160 aa)) form an interaction with HERC5 region. Phosphothreonine is present on residues Thr230, Thr237, and Thr246. Residues Lys353 and Lys359 each participate in a glycyl lysine isopeptide (Lys-Gly) (interchain with G-Cter in ISG15) cross-link. N6-acetyllysine is present on Lys359. Residue Ser378 is modified to Phosphoserine. At Ser379 the chain carries Diphosphoserine. Ser379 carries the post-translational modification Phosphoserine; by TBK1. Ser388 is subject to Phosphoserine; by IKKE. Phosphoserine is present on Ser390. Position 396 is a phosphothreonine (Thr396).

Belongs to the IRF family. As to quaternary structure, monomer. Homodimer; phosphorylation-induced. Interacts (when phosphorylated) with CREBBP. Interacts with MAVS (via phosphorylated pLxIS motif). Interacts with TICAM1 (via phosphorylated pLxIS motif). Interacts with STING1 (via phosphorylated pLxIS motif). Interacts with IKBKE and TBK1. Interacts with TICAM2. Interacts with RBCK1. Interacts with HERC5. Interacts with DDX3X; the interaction allows the phosphorylation and activation of IRF3 by IKBKE. Interacts with TRIM21 and ULK1, in the presence of TRIM21; this interaction leads to IRF3 degradation by autophagy. Interacts with RIOK3; RIOK3 probably mediates the interaction of TBK1 with IRF3. Interacts with ILRUN; the interaction inhibits IRF3 binding to its DNA consensus sequence. Interacts with LYAR; this interaction impairs IRF3 DNA-binding activity. Interacts with TRAF3. Interacts with ZDHHC11; ZDHHC11 recruits IRF3 to STING1 upon DNA virus infection and thereby promotes IRF3 activation. Interacts with HSP90AA1; the interaction mediates IRF3 association with TOMM70. Interacts with BCL2; the interaction decreases upon Sendai virus infection. Interacts with BAX; the interaction is direct, increases upon virus infection and mediates the formation of the apoptosis complex TOMM70:HSP90AA1:IRF3:BAX. Interacts with DDX56. Interacts with NBR1. In terms of processing, constitutively phosphorylated on many Ser/Thr residues. Activated following phosphorylation by TBK1 and IKBKE. Innate adapter proteins, such as MAVS, STING1 or TICAM1, are first activated by viral RNA, cytosolic DNA, and bacterial lipopolysaccharide (LPS), respectively, leading to activation of the kinases TBK1 and IKBKE. These kinases then phosphorylate the adapter proteins on the pLxIS motif, leading to recruitment of IRF3, thereby licensing IRF3 for phosphorylation by TBK1. Phosphorylation at Ser-379 is followed by pyrophosphorylation at the same residue, promoting phosphorylation at Ser-388. Phosphorylated IRF3 dissociates from the adapter proteins, dimerizes, and then enters the nucleus to induce IFNs. Pyrophosphorylated by UAP1 following phosphorylation at Ser-379 by TBK1. Pyrophosphorylation promotes subsequent phosphorylation at Ser-388, leading to homodimerization of IRF3. Post-translationally, acetylation at Lys-359 by KAT8 inhibits recruimtent to promoters and transcription factor activity. Acetylation by KAT8 is promoted by phosphorylation at Ser-388. In terms of processing, ubiquitinated; ubiquitination involves RBCK1 leading to proteasomal degradation. Polyubiquitinated; ubiquitination involves TRIM21 leading to proteasomal degradation. Ubiquitinated by UBE3C, leading to its degradation. Deubiquitinated by USP5 on both 'Lys-48'-linked unanchored and 'Lys-63'-linked anchored polyubiquitin, leading to inhibition of anti-RNA viral innate immunity. ISGylated by HERC5 resulting in sustained IRF3 activation and in the inhibition of IRF3 ubiquitination by disrupting PIN1 binding. The phosphorylation state of IRF3 does not alter ISGylation. Post-translationally, proteolytically cleaved by apoptotic caspases during apoptosis, leading to its inactivation. Cleavage by CASP3 during virus-induced apoptosis inactivates it, preventing cytokine overproduction.

It is found in the cytoplasm. Its subcellular location is the nucleus. The protein localises to the mitochondrion. Its activity is regulated as follows. In the absence of viral infection, maintained as a monomer in an autoinhibited state. Phosphorylation by TBK1 and IKBKE disrupts this autoinhibition leading to the liberation of the DNA-binding and dimerization activities and its nuclear localization where it can activate type I IFN and ISG genes. Phosphorylation and activation follow the following steps: innate adapter proteins, such as MAVS, STING1 or TICAM1, are first activated by viral RNA, cytosolic DNA and bacterial lipopolysaccharide (LPS), respectively, leading to activation of the kinases TBK1 and IKBKE. These kinases then phosphorylate the adapter proteins on their pLxIS motif, leading to recruitment of IRF3, thereby licensing IRF3 for phosphorylation by TBK1. Phosphorylated IRF3 dissociates from the adapter proteins, dimerizes, and then enters the nucleus to induce IFNs. Key transcriptional regulator of type I interferon (IFN)-dependent immune responses which plays a critical role in the innate immune response against DNA and RNA viruses. Regulates the transcription of type I IFN genes (IFN-alpha and IFN-beta) and IFN-stimulated genes (ISG) by binding to an interferon-stimulated response element (ISRE) in their promoters. Acts as a more potent activator of the IFN-beta (IFNB) gene than the IFN-alpha (IFNA) gene and plays a critical role in both the early and late phases of the IFNA/B gene induction. Found in an inactive form in the cytoplasm of uninfected cells and following viral infection, double-stranded RNA (dsRNA), or toll-like receptor (TLR) signaling, is phosphorylated by IKBKE and TBK1 kinases. This induces a conformational change, leading to its dimerization and nuclear localization and association with CREB binding protein (CREBBP) to form dsRNA-activated factor 1 (DRAF1), a complex which activates the transcription of the type I IFN and ISG genes. Can activate distinct gene expression programs in macrophages and can induce significant apoptosis in primary macrophages. This chain is Interferon regulatory factor 3 (Irf3), found in Mus musculus (Mouse).